We begin with the raw amino-acid sequence, 246 residues long: MCDKEMCDKEMCEKKEEVDEDIYIASFDIGKVNFAYCIEKCFLKDIKKRTETTIDEMCSKGKIEIIDNVRLVSFPKNIVTRRRGPRKGTTYKPSGKYTFESLLLFLEERKTFWNKCHIFVIEQQMSQNKEGLKISYHLEAYFKTCYGTFKEVVLFPSYHKTQVFEAEKWINLDPLTRKTDKYGKPFYTKMSYNNRKKSCISKALEILEQRHDTDTIWKLERSQKKDDMCDVICQLQAYKWLYLFEK.

It belongs to the IIV-6 170L family.

This is an uncharacterized protein from Acheta domesticus (House cricket).